Here is a 260-residue protein sequence, read N- to C-terminus: Type II methyltransferase M.CviBI (260 aa).

S-adenosyl-L-methionine-binding residues include Trp7, Lys11, Asp54, and Asp177.

The protein belongs to the N(4)/N(6)-methyltransferase family.

It catalyses the reaction a 2'-deoxyadenosine in DNA + S-adenosyl-L-methionine = an N(6)-methyl-2'-deoxyadenosine in DNA + S-adenosyl-L-homocysteine + H(+). An alpha subtype methylase, recognizes the double-stranded sequence 5'-GANTC-3', methylates A-2 on both strands, and protects the DNA from cleavage by the CviBI endonuclease. In Paramecium bursaria Chlorella virus NC1A (PBCV-NC1A), this protein is Type II methyltransferase M.CviBI.